Consider the following 346-residue polypeptide: MKTKEFHFNLPYSLIAQYPSEKRGSSRLMVLDPKLQKIYHENSVNNILKYINSDTFIVFNNSKVRKSRMYAESEMGSNVEFLILDRIGTDLFTALISKSKKQIVGNVYKFPEGLMGKILSKNSSEIVLKFNDDVREDYFEKHGFVPIPPYIKRDYDKIDEDRYQTIYSKYVGSAASATAGLHFSRDLFSAFEKNNIEYDFITLHVGLGTFLPVRSKKVEEHNMHFETFLIKDCVANRLENAKFLGKKVLSIGTTTLRALESSYDNKLKKFKTGQQSTNLFIYPGKNYCFKFVDMLFTNFHTPQSTLLMLVSAFAGKDFVFSSYEEGINKGYKFFSYGDAMLVLNHI.

It belongs to the QueA family. As to quaternary structure, monomer.

The protein resides in the cytoplasm. It carries out the reaction 7-aminomethyl-7-carbaguanosine(34) in tRNA + S-adenosyl-L-methionine = epoxyqueuosine(34) in tRNA + adenine + L-methionine + 2 H(+). Its pathway is tRNA modification; tRNA-queuosine biosynthesis. Functionally, transfers and isomerizes the ribose moiety from AdoMet to the 7-aminomethyl group of 7-deazaguanine (preQ1-tRNA) to give epoxyqueuosine (oQ-tRNA). In Borreliella afzelii (strain PKo) (Borrelia afzelii), this protein is S-adenosylmethionine:tRNA ribosyltransferase-isomerase.